Here is a 180-residue protein sequence, read N- to C-terminus: Ribosome maturation factor RimM (180 aa).

One can recognise a PRC barrel domain in the interval Glu97 to Leu176.

It belongs to the RimM family. As to quaternary structure, binds ribosomal protein uS19.

The protein localises to the cytoplasm. An accessory protein needed during the final step in the assembly of 30S ribosomal subunit, possibly for assembly of the head region. Essential for efficient processing of 16S rRNA. May be needed both before and after RbfA during the maturation of 16S rRNA. It has affinity for free ribosomal 30S subunits but not for 70S ribosomes. In Helicobacter acinonychis (strain Sheeba), this protein is Ribosome maturation factor RimM.